The chain runs to 416 residues: 3-oxoacyl-[acyl-carrier-protein] synthase 1 (416 aa).

The region spanning 11 to 415 is the Ketosynthase family 3 (KS3) domain; it reads FPSVVVTAVT…GHNVALAFGR (405 aa). Catalysis depends on for beta-ketoacyl synthase activity residues C171, H311, and H345. Residues H311 and H345 each contribute to the substrate site.

Belongs to the thiolase-like superfamily. Beta-ketoacyl-ACP synthases family.

It is found in the cytoplasm. It carries out the reaction an ultra-long-chain mono-unsaturated fatty acyl-[ACP] + malonyl-[ACP] + H(+) = a 3-oxo-ultra-long-chain mono-unsaturated fatty acyl-[ACP] + holo-[ACP] + CO2. It participates in lipid metabolism; mycolic acid biosynthesis. In terms of biological role, part of the mycobacterial fatty acid elongation system FAS-II, which is involved in mycolic acid biosynthesis. Catalyzes the elongation of long chain acyl-ACP substrates by the addition of two carbons from malonyl-ACP to an acyl acceptor. Involved in the initial extension of the mycolate chain and forms monounsaturated fatty acids that averaged 40 carbons in length. The polypeptide is 3-oxoacyl-[acyl-carrier-protein] synthase 1 (kasA) (Mycobacterium leprae (strain TN)).